A 474-amino-acid polypeptide reads, in one-letter code: MMDRKNASPNSGTVIAIRGSVVDILFAEQLPPIRSLLTTGHQHQILIEVFSQLDEHRVRCIALTPTQGLARGMLVEDSGGPLLAPVGKTILSRMFDVFGNAIDRKAPPIGTQWRSVHNEPPAIAQLATKSQVFETGIKMIDVLMPLERGGKAGLFGGAGVGKTVLLTEMIHNMVGQHAGVSIFCGIGERCREGEELYREMKTAGVLDNMVMVFGQMNEPPGARFRVGHAALTMAEYFRDDEHRDVLLLIDNIFRFIQAGMEVSGLMGQMPARLGYQPTLGTELSQLEDRIANTDSGAITSIQAVYVPADDFTDPAAVHTFSHLSASIVLSRKRASEGLYPAIDPLLSNSKMATPSIIGRRHYDLAQKIRSTLAQYAELKDIIAMLGMEQLSPADHKIVARARRLERFFTQPFFTTEQFTSMPGKLVSLNDALDGCERILHDEFKDYPESALYMIGSIDEAVSKYRPKLDRVNSQ.

Residue 156–163 (GGAGVGKT) coordinates ATP.

It belongs to the ATPase alpha/beta chains family. As to quaternary structure, F-type ATPases have 2 components, CF(1) - the catalytic core - and CF(0) - the membrane proton channel. CF(1) has five subunits: alpha(3), beta(3), gamma(1), delta(1), epsilon(1). CF(0) has three main subunits: a(1), b(2) and c(9-12). The alpha and beta chains form an alternating ring which encloses part of the gamma chain. CF(1) is attached to CF(0) by a central stalk formed by the gamma and epsilon chains, while a peripheral stalk is formed by the delta and b chains.

The protein resides in the cell inner membrane. The enzyme catalyses ATP + H2O + 4 H(+)(in) = ADP + phosphate + 5 H(+)(out). Produces ATP from ADP in the presence of a proton gradient across the membrane. The catalytic sites are hosted primarily by the beta subunits. This chain is ATP synthase subunit beta 2, found in Shewanella frigidimarina (strain NCIMB 400).